We begin with the raw amino-acid sequence, 5101 residues long: Malformin synthetase mlfA (5101 aa).

The tract at residues 225-616 is adenylation 1; it reads ERHAANRPHS…CGRADTQVKL (392 aa). The 74-residue stretch at 757 to 830 folds into the Carrier 1 domain; the sequence is SRLEQKIQLA…EAASLAEVQE (74 aa). S791 bears the O-(pantetheine 4'-phosphoryl)serine mark. The segment at 868 to 1299 is condensation 1; sequence EDVFPCTTMQ…ALNTLSLLQA (432 aa). The adenylation 2 stretch occupies residues 1327–1716; that stretch reads DRWVTRQPEG…GRKDTQVKLR (390 aa). Residues 1854–1931 enclose the Carrier 2 domain; sequence TPTLELERTL…QLAAEVGEPA (78 aa). S1891 carries the O-(pantetheine 4'-phosphoryl)serine modification. Disordered stretches follow at residues 1932 to 1961 and 1994 to 2020; these read GQSASSASSTTEEGFTFSTPDDSSTNDGVD and GGSSSNKTPSVSSSSSSSSSSKRKKNA. Composition is skewed to low complexity over residues 1934–1958 and 1996–2013; these read SASSASSTTEEGFTFSTPDDSSTND and SSSNKTPSVSSSSSSSSS. The segment at 2066–2481 is condensation 2; the sequence is EDIYPATALQ…AVSCSDKETL (416 aa). Positions 2504–2896 are adenylation 3; the sequence is RRTPHAPAVC…IGRRDGQLKL (393 aa). Positions 3032 to 3108 constitute a Carrier 3 domain; the sequence is RPVTSQEHEM…QLICHLNTIR (77 aa). Residue S3069 is modified to O-(pantetheine 4'-phosphoryl)serine. 2 condensation regions span residues 3125–3590 and 3611–4030; these read WVAL…TYDQ and NIYP…EHLV. The adenylation 4 stretch occupies residues 4055–4445; the sequence is HNSRQAVCAW…VGRKDNQIKF (391 aa). The region spanning 4579–4655 is the Carrier 4 domain; the sequence is MPSTAAERKM…DLSDQAKSLI (77 aa). O-(pantetheine 4'-phosphoryl)serine is present on S4616. Residues 4712–5097 form a condensation 5 region; it reads IVVDIPGPID…KIVGLLRHPE (386 aa).

The protein belongs to the NRP synthetase family.

The protein operates within secondary metabolite biosynthesis. In terms of biological role, nonribosomal peptide synthetase; part of the gene cluster that mediates the biosynthesis of malformins, cyclic pentapeptides with a disulfide bond between 2 consecutive cysteins, that show potential anti-tumor as well as antimalarial and antitrypanosomal properties. The nonribosomal peptide synthetase mlfA is responsible of the formation of the cyclic pentapeptide. The malformin biosynthesis clusters in malformin-producing fungi also contain enzymes involved in the formation of the disulfide bond between the two consecutive cysteins within malformins, in addition to additional tailoring enzymes such as methyltransferases or oxidoreductases. They are also composed of up to 4 major facilitator superfamily transporters, and transcription factors probably involved in the regulation of the expression of those clusters. The polypeptide is Malformin synthetase mlfA (Aspergillus kawachii (strain NBRC 4308) (White koji mold)).